The chain runs to 195 residues: Protein Fer3 (195 aa).

Disordered regions lie at residues methionine 1–glutamine 24 and proline 56–valine 82. Residues serine 63–serine 75 are compositionally biased toward low complexity. Residues alanine 86–methionine 138 enclose the bHLH domain. Positions threonine 145–histidine 175 are disordered.

It localises to the nucleus. Its function is as follows. Transcription factor that binds to the E-box and functions as inhibitor of transcription. DNA binding requires dimerization with an E protein. Inhibits transcription activation by ASCL1/MASH1 by sequestering E proteins. This chain is Protein Fer3 (fer3), found in Drosophila melanogaster (Fruit fly).